Here is a 309-residue protein sequence, read N- to C-terminus: Mitochondrial phosphate carrier protein 1, mitochondrial (309 aa).

Topologically, residues 1–15 (MTRVKSKLDEELSSP) are mitochondrial intermembrane. A helical transmembrane segment spans residues 16–36 (WFYTVCTMGGMLSAGTTHLAI). Solcar repeat units follow at residues 16–100 (WFYT…FKTL), 109–193 (NRTS…SVEF), and 210–289 (QQLG…IKVL). Residues 37–74 (TPLDVLKVNMQVNPVKYNSIPSGFSTLLREHGHSYLWR) are Mitochondrial matrix-facing. A helical transmembrane segment spans residues 75 to 94 (GWSGKLLGYGVQGGCRFGLY). At 95–111 (EYFKTLYSDVLPNHNRT) the chain is on the mitochondrial intermembrane side. A helical membrane pass occupies residues 112–132 (SIYFLSSASAQIFADMALCPF). Topologically, residues 133 to 167 (EAIKVRVQTQPMFAKGLLDGFPRVYRSEGLAGFHR) are mitochondrial matrix. Residues 168-187 (GLFPLWCRNLPFSMVMFSTF) traverse the membrane as a helical segment. Residues 188 to 208 (EQSVEFIYQKIIQKRKQDCSK) lie on the Mitochondrial intermembrane side of the membrane. A helical membrane pass occupies residues 209–229 (AQQLGVTCLAGYTAGAVGTII). Over 230-268 (SNPADVVLSSLYNNKAKNVLQAVRNIGFVGLFTRSLPVR) the chain is Mitochondrial matrix. The chain crosses the membrane as a helical span at residues 269–289 (ITIVGPVITLQWFFYDAIKVL). The Mitochondrial intermembrane portion of the chain corresponds to 290–309 (SGFPTSGGVKKPVDAAKLSV).

Belongs to the mitochondrial carrier (TC 2.A.29) family. Expressed in stems, leaves and flowers. Strong expression in the stamens of flowers.

It is found in the mitochondrion inner membrane. Transport of phosphate groups from the cytosol to the mitochondrial matrix. Mediates salt stress tolerance through an ATP-dependent pathway and via modulation of the gibberellin metabolism. The protein is Mitochondrial phosphate carrier protein 1, mitochondrial (MPT1) of Arabidopsis thaliana (Mouse-ear cress).